The primary structure comprises 31 residues: Histone H1.3 (31 aa).

It belongs to the histone H1/H5 family.

Its subcellular location is the nucleus. It localises to the chromosome. Functionally, histones H1 are necessary for the condensation of nucleosome chains into higher-order structures. In Triticum aestivum (Wheat), this protein is Histone H1.3.